We begin with the raw amino-acid sequence, 493 residues long: Cytochrome c-552 (493 aa).

Positions 1–25 are cleaved as a signal peptide; that stretch reads MEKKLKSWQGWLLSGGSMVVVFVLG. H116 contacts heme c. C144, C147, and K148 together coordinate heme. Heme c is bound by residues C182, C185, H186, C224, C227, and H228. Ca(2+) contacts are provided by E230, Y231, K276, and Q278. Residue Y231 participates in substrate binding. Substrate is bound at residue H279. Heme c is bound by residues H290, C297, C300, H301, H315, C328, C331, H332, and H407.

This sequence belongs to the cytochrome c-552 family. Ca(2+) is required as a cofactor. The cofactor is heme c.

It localises to the periplasm. It catalyses the reaction 6 Fe(III)-[cytochrome c] + NH4(+) + 2 H2O = 6 Fe(II)-[cytochrome c] + nitrite + 8 H(+). The protein operates within nitrogen metabolism; nitrate reduction (assimilation). Functionally, catalyzes the reduction of nitrite to ammonia, consuming six electrons in the process. The polypeptide is Cytochrome c-552 (Bacteroides thetaiotaomicron (strain ATCC 29148 / DSM 2079 / JCM 5827 / CCUG 10774 / NCTC 10582 / VPI-5482 / E50)).